The primary structure comprises 409 residues: Putative protein disulfide-isomerase DDB_G0275025 (409 aa).

The first 21 residues, Met1 to Gly21, serve as a signal peptide directing secretion. The 113-residue stretch at Asn28–Ser140 folds into the Thioredoxin domain. Cys57 and Cys60 are joined by a disulfide. Residues Ser245–Ser273 form a disordered region. Over residues Asn247 to Glu259 the composition is skewed to low complexity. A compositionally biased stretch (basic and acidic residues) spans Glu260 to Ser273. A Prevents secretion from ER motif is present at residues Lys406–Leu409.

It belongs to the protein disulfide isomerase family.

Its subcellular location is the endoplasmic reticulum lumen. The enzyme catalyses Catalyzes the rearrangement of -S-S- bonds in proteins.. The chain is Putative protein disulfide-isomerase DDB_G0275025 from Dictyostelium discoideum (Social amoeba).